A 134-amino-acid polypeptide reads, in one-letter code: Small ribosomal subunit protein uS8c (134 aa).

This sequence belongs to the universal ribosomal protein uS8 family. As to quaternary structure, part of the 30S ribosomal subunit.

The protein resides in the plastid. One of the primary rRNA binding proteins, it binds directly to 16S rRNA central domain where it helps coordinate assembly of the platform of the 30S subunit. The chain is Small ribosomal subunit protein uS8c (rps8) from Cuscuta gronovii (Common dodder).